The primary structure comprises 142 residues: Large ribosomal subunit protein uL13 (142 aa).

Belongs to the universal ribosomal protein uL13 family. Part of the 50S ribosomal subunit.

In terms of biological role, this protein is one of the early assembly proteins of the 50S ribosomal subunit, although it is not seen to bind rRNA by itself. It is important during the early stages of 50S assembly. In Stenotrophomonas maltophilia (strain R551-3), this protein is Large ribosomal subunit protein uL13.